Here is a 453-residue protein sequence, read N- to C-terminus: GTPase Der (453 aa).

2 consecutive EngA-type G domains span residues 4 to 169 (PIVA…PPVT) and 177 to 352 (IKIA…EEHK). GTP is bound by residues 10 to 17 (GRPNVGKS), 57 to 61 (DTGGL), 120 to 123 (NKCE), 183 to 190 (GRPNVGKS), 230 to 234 (DTAGI), and 295 to 298 (NKWD). The region spanning 353-438 (RRVSTSVINE…PIRLLWRSKK (86 aa)) is the KH-like domain.

The protein belongs to the TRAFAC class TrmE-Era-EngA-EngB-Septin-like GTPase superfamily. EngA (Der) GTPase family. As to quaternary structure, associates with the 50S ribosomal subunit.

Functionally, GTPase that plays an essential role in the late steps of ribosome biogenesis. The protein is GTPase Der of Nostoc sp. (strain PCC 7120 / SAG 25.82 / UTEX 2576).